Here is a 436-residue protein sequence, read N- to C-terminus: Two-pore potassium channel 3 (436 aa).

Topologically, residues 1 to 148 (MANEGSDPLL…QKDPTETSRS (148 aa)) are cytoplasmic. The tract at residues 62 to 117 (SHFIDSMKQPSPSSSSTAVNNPFSDSSTLDPLLPPPPPQPEPWLSDQTSSHCQGHA) is disordered. Positions 71-92 (PSPSSSSTAVNNPFSDSSTLDP) are enriched in low complexity. Residues 93-102 (LLPPPPPQPE) are compositionally biased toward pro residues. The helical transmembrane segment at 149-169 (VVRQAFALLVVYLSLGVLIYW) threads the bilayer. An intramembrane region (pore-forming) is located at residues 185-204 (DGLYFCIVTMCTIGYGDITP). Residues 212–232 (FSIMFVLVGFGFIDILLSGMV) traverse the membrane as a helical segment. Residues 233 to 274 (SYVLDLQESYMLDSAKRRDEPEKRRSYIIDVKKGRMRIRLKV) are Cytoplasmic-facing. Residues 275–295 (ALALGVVVLCIAVGVGIMHFI) traverse the membrane as a helical segment. An intramembrane region (pore-forming) is located at residues 302-321 (DSFYLSVMSVTTVGYGDRAF). Residues 328-348 (LFAAIWLLVSTLAVARAFLYL) form a helical membrane-spanning segment. At 349–436 (AEARVDKRNR…LDLLEGGSGD (88 aa)) the chain is on the cytoplasmic side. 2 consecutive EF-hand domains span residues 365-400 (LCET…EMEK) and 404-436 (KDIL…GSGD). Ca(2+) is bound by residues Asp378, Asp380, Asn382, Cys384, Glu389, Asp417, Asn421, Lys423, and Asp428.

This sequence belongs to the two pore domain potassium channel (TC 1.A.1.7) family. As to quaternary structure, homodimer. Expressed in roots, cotyledons, stems, hypocotyls, leaves and flowers. Detected in root tips and in mesophyll cells and guard cells of the leaves.

The protein resides in the vacuole membrane. The protein localises to the plastid. It is found in the chloroplast thylakoid membrane. Inhibited by barium, but not by tetraethylammonium. Two-pore potassium channel modulating the proton motive force (pmf) necessary to convert photochemical energy into physiological functions. Mediates the potassium efflux from the thylakoid lumen required for the regulation of the transmembrane electrical potential, the enhancement of the pH gradient for ATP synthesis, the regulation of electron flow, and pH-mediated photoprotective responses. Requires calcium for channel activity. In Arabidopsis thaliana (Mouse-ear cress), this protein is Two-pore potassium channel 3.